The following is a 561-amino-acid chain: MSEWWKEAVVYQIYPRSFYDANGDGFGDLQGVIQKLDYIKNLGADVIWLSPVFDSPQDDNGYDISDYKNMYEKFGTNEDMFQLIDEVHKRGMKIVMDLVVNHTSDEHAWFAESRKSKDNPYRDYYLWKDPKPDGSEPNNWGSIFSGSAWTYDEGTGQYYLHYFSKKQPDLNWENEAVRREVYDVMRFWMDRGVDGWRMDVIGSISKYTDFPDYETDHSRSYIVGRYHSNGPRLHEFIQEMNREVLSHYDCMTVGEANGSDIEEAKKYTDASRQELNMIFTFEHMDIDKEQNSPNGKWQIKPFDLIALKKTMTRWQTGLMNVGWNTLYFENHDQPRVISRWGNDRKLRKECAKAFATVLHGMKGTPFIYQGEEIGMVNSDMPLEMYDDLEIKNAYRELVVENKTMSEKEFVKAVMIKGRDHARTPMQWDAGKHAGFTAGDPWIPVNSRYQDINVKESLEDQDSIFFYYQKLIQLRKQYKIMIYGDYQLLQENDPQVFSYLREYRGEKLLVVVNLSEEKALFEAPPELIHERWKVLISNYPQERADLKSISLKPYEAVMGISI.

Ca(2+) contacts are provided by Asp-20, Asn-22, Asp-24, Phe-26, and Asp-28. The active-site Nucleophile is the Asp-199. The active-site Proton donor is Glu-255.

The protein belongs to the glycosyl hydrolase 13 family.

It localises to the cytoplasm. The catalysed reaction is Hydrolysis of (1-&gt;6)-alpha-D-glucosidic linkages in some oligosaccharides produced from starch and glycogen by alpha-amylase, and in isomaltose.. Hydrolyzes various disaccharides such as sucrose, maltose, and isomaltose with different efficiencies. Also hydrolyzes longer maltodextrins from maltotriose up to maltohexaose, but not maltoheptaose, palatinose, isomaltotriose, or isomaltotetraose. The protein is Oligo-1,6-glucosidase 1 (malL) of Bacillus subtilis (strain 168).